The primary structure comprises 114 residues: uncharacterized protein (114 aa).

3 consecutive transmembrane segments (helical) span residues 38 to 60 (PLWF…TAGI), 64 to 86 (YAAI…AHMF), and 91 to 113 (SVIM…MGSY).

The protein localises to the cell membrane. This is an uncharacterized protein from Bacillus subtilis (strain 168).